Consider the following 130-residue polypeptide: Small ribosomal subunit protein uS8 (130 aa).

This sequence belongs to the universal ribosomal protein uS8 family. In terms of assembly, part of the 30S ribosomal subunit. Contacts proteins S5 and S12.

One of the primary rRNA binding proteins, it binds directly to 16S rRNA central domain where it helps coordinate assembly of the platform of the 30S subunit. The protein is Small ribosomal subunit protein uS8 of Phytoplasma australiense.